Here is a 183-residue protein sequence, read N- to C-terminus: MDIDPYKEFGASVELLSFLPSDFFPSVRDLLDTASALYRDALESPEHCTPNHTALRQAILCWGELMTLASWVGNNLEDPAARDLVVNYVNTNMGLKIRQLLWFHISCLTFGRDTVLEYLVSFGVWIRTPPAYRPPNAPILSTLPETTVVRQRGRAPRRRTPSPRRRRSQSPRRRRSQSPASQC.

Residues 136-183 (NAPILSTLPETTVVRQRGRAPRRRTPSPRRRRSQSPRRRRSQSPASQC) form a disordered region. Residues 151 to 176 (QRGRAPRRRTPSPRRRRSQSPRRRRS) show a composition bias toward basic residues. The stretch at 155–161 (APRRRTP) is one 1; half-length repeat. Residues 155 to 177 (APRRRTPSPRRRRSQSPRRRRSQ) form a 3 X 8 AA repeats of S-P-R-R-R-[PR]-S-Q region. Positions 158–175 (RRTPSPRRRRSQSPRRRR) match the Bipartite nuclear localization signal motif. A phosphoserine; by host mark is found at serine 162 and serine 170. 2 consecutive repeat copies span residues 162–169 (SPRRRRSQ) and 170–177 (SPRRRRSQ). Residues 177 to 183 (QSPASQC) are RNA binding.

Belongs to the orthohepadnavirus core antigen family. As to quaternary structure, homodimerizes, then multimerizes. Interacts with cytosol exposed regions of viral L glycoprotein present in the reticulum-to-Golgi compartment. Interacts with human FLNB. Phosphorylated form interacts with host importin alpha; this interaction depends on the exposure of the NLS, which itself depends upon genome maturation and/or phosphorylation of the capsid protein. Interacts with host NUP153. Phosphorylated by host SRPK1, SRPK2, and maybe protein kinase C or GAPDH. Phosphorylation is critical for pregenomic RNA packaging. Protein kinase C phosphorylation is stimulated by HBx protein and may play a role in transport of the viral genome to the nucleus at the late step during the viral replication cycle.

It localises to the virion. It is found in the host cytoplasm. Its function is as follows. Self assembles to form an icosahedral capsid. Most capsids appear to be large particles with an icosahedral symmetry of T=4 and consist of 240 copies of capsid protein, though a fraction forms smaller T=3 particles consisting of 180 capsid proteins. Entering capsids are transported along microtubules to the nucleus. Phosphorylation of the capsid is thought to induce exposure of nuclear localization signal in the C-terminal portion of the capsid protein that allows binding to the nuclear pore complex via the importin (karyopherin-) alpha and beta. Capsids are imported in intact form through the nuclear pore into the nuclear basket, where it probably binds NUP153. Only capsids that contain the mature viral genome can release the viral DNA and capsid protein into the nucleoplasm. Immature capsids get stuck in the basket. Capsids encapsulate the pre-genomic RNA and the P protein. Pre-genomic RNA is reverse-transcribed into DNA while the capsid is still in the cytoplasm. The capsid can then either be directed to the nucleus, providing more genomes for transcription, or bud through the endoplasmic reticulum to provide new virions. In Homo sapiens (Human), this protein is Capsid protein.